We begin with the raw amino-acid sequence, 377 residues long: Succinyl-diaminopimelate desuccinylase (377 aa).

Histidine 66 contributes to the Zn(2+) binding site. Residue aspartate 68 is part of the active site. Residue aspartate 99 participates in Zn(2+) binding. The Proton acceptor role is filled by glutamate 133. Glutamate 134, glutamate 163, and histidine 349 together coordinate Zn(2+).

It belongs to the peptidase M20A family. DapE subfamily. Homodimer. It depends on Zn(2+) as a cofactor. Co(2+) serves as cofactor.

The catalysed reaction is N-succinyl-(2S,6S)-2,6-diaminopimelate + H2O = (2S,6S)-2,6-diaminopimelate + succinate. It functions in the pathway amino-acid biosynthesis; L-lysine biosynthesis via DAP pathway; LL-2,6-diaminopimelate from (S)-tetrahydrodipicolinate (succinylase route): step 3/3. Catalyzes the hydrolysis of N-succinyl-L,L-diaminopimelic acid (SDAP), forming succinate and LL-2,6-diaminopimelate (DAP), an intermediate involved in the bacterial biosynthesis of lysine and meso-diaminopimelic acid, an essential component of bacterial cell walls. The polypeptide is Succinyl-diaminopimelate desuccinylase (Legionella pneumophila (strain Corby)).